Consider the following 603-residue polypeptide: Chaperone protein DnaK (603 aa).

Thr-175 carries the post-translational modification Phosphothreonine; by autocatalysis. Over residues 573-586 (AQQAQQQNPDNQNN) the composition is skewed to low complexity. The tract at residues 573–603 (AQQAQQQNPDNQNNNKDDVTEATVTDDSTKK) is disordered. The span at 594 to 603 (ATVTDDSTKK) shows a compositional bias: polar residues.

This sequence belongs to the heat shock protein 70 family.

In terms of biological role, acts as a chaperone. The polypeptide is Chaperone protein DnaK (Ureaplasma parvum serovar 3 (strain ATCC 27815 / 27 / NCTC 11736)).